A 498-amino-acid polypeptide reads, in one-letter code: Zinc finger protein 79 (498 aa).

The interval 1 to 23 (MLEEGVLPSPGPALPQEENTGEE) is disordered. Residues 38 to 109 (TFFSSVTVAF…EGEDLRSPSP (72 aa)) enclose the KRAB domain. 11 C2H2-type zinc fingers span residues 193 to 215 (YACN…QKSH), 221 to 243 (YECS…QRIH), 249 to 271 (YKCS…QRTH), 277 to 299 (YRCS…QRIH), 305 to 327 (YECS…QRTH), 333 to 355 (YKCS…QRIH), 361 to 383 (YRCA…QRTH), 389 to 411 (YKCS…QKTH), 417 to 439 (YKCN…HIIH), 445 to 467 (YECN…QRIH), and 473 to 495 (YECS…QRLH).

Belongs to the krueppel C2H2-type zinc-finger protein family.

The protein localises to the nucleus. Its function is as follows. May be involved in transcriptional regulation. This is Zinc finger protein 79 (ZNF79) from Homo sapiens (Human).